Reading from the N-terminus, the 816-residue chain is Probable transcriptional regulator SLK2 (816 aa).

Disordered regions lie at residues 133–153 and 166–189; these read HDPS…SQTN and SFFQ…KQDD. 2 stretches are compositionally biased toward polar residues: residues 139 to 153 and 166 to 176; these read LGGS…SQTN and SFFQDPNNLTQ. The interval 307–554 is dimerization; the sequence is PSESSIVYWR…DQKVGPIEAL (248 aa). The short motif at 316–330 is the Nuclear localization signal element; it reads RKFVTEYFSPRAKKR. 2 stretches are compositionally biased toward polar residues: residues 644 to 662 and 672 to 711; these read IQQE…QGTS and PSIS…SGNQ. Residues 644-711 form a disordered region; it reads IQQEPSRNRS…QPPSCSSGNQ (68 aa).

It belongs to the adn1/SEU family. As to quaternary structure, forms corepressor complexes with LUH; LUH is the transcription repressor subunit and SLK2 the specific DNA-binding adapters. In terms of tissue distribution, expressed in young flower meristems, ovules and the carpel margin meristem.

It localises to the nucleus. Its function is as follows. Probable transcription regulator that functions in the development of the carpel margin meristem similarly to SEUSS (SEU). In association with SEU, supports organ development from meristematic regions by facilitating auxin response and thus organ initiation, and by sustaining meristematic potential through the maintenance of PHABULOSA expression. DNA-binding adapter subunit of the SEU-SLK2 transcriptional corepressor of abiotic stress (e.g. salt and osmotic stress) response genes. The protein is Probable transcriptional regulator SLK2 (SLK2) of Arabidopsis thaliana (Mouse-ear cress).